A 355-amino-acid polypeptide reads, in one-letter code: Protein RecA (355 aa).

67-74 (GPESSGKT) contributes to the ATP binding site. Residues 331–355 (NQDDKPDFTPAAHEVDEGSEAKENF) form a disordered region.

Belongs to the RecA family.

The protein localises to the cytoplasm. Functionally, can catalyze the hydrolysis of ATP in the presence of single-stranded DNA, the ATP-dependent uptake of single-stranded DNA by duplex DNA, and the ATP-dependent hybridization of homologous single-stranded DNAs. It interacts with LexA causing its activation and leading to its autocatalytic cleavage. This chain is Protein RecA, found in Erwinia tasmaniensis (strain DSM 17950 / CFBP 7177 / CIP 109463 / NCPPB 4357 / Et1/99).